Reading from the N-terminus, the 296-residue chain is Acetylglutamate kinase (296 aa).

Substrate-binding positions include 68–69 (GG), R90, and N195.

Belongs to the acetylglutamate kinase family. ArgB subfamily.

The protein resides in the cytoplasm. It catalyses the reaction N-acetyl-L-glutamate + ATP = N-acetyl-L-glutamyl 5-phosphate + ADP. The protein operates within amino-acid biosynthesis; L-arginine biosynthesis; N(2)-acetyl-L-ornithine from L-glutamate: step 2/4. Its function is as follows. Catalyzes the ATP-dependent phosphorylation of N-acetyl-L-glutamate. This chain is Acetylglutamate kinase, found in Desulfotalea psychrophila (strain LSv54 / DSM 12343).